The sequence spans 147 residues: Lysozyme C (147 aa).

The signal sequence occupies residues 1–18 (MRSLLILVLCFLPLAALG). Residues 19–147 (KVFGRCELAA…VQAWIRGCRL (129 aa)) enclose the C-type lysozyme domain. 4 disulfide bridges follow: C24-C145, C48-C133, C82-C98, and C94-C112. Residues E53 and D70 contribute to the active site. D119 lines the substrate pocket.

The protein belongs to the glycosyl hydrolase 22 family. In terms of assembly, monomer. In the egg white and polymorphonuclear leukocytes.

Its subcellular location is the secreted. The catalysed reaction is Hydrolysis of (1-&gt;4)-beta-linkages between N-acetylmuramic acid and N-acetyl-D-glucosamine residues in a peptidoglycan and between N-acetyl-D-glucosamine residues in chitodextrins.. Lysozymes have primarily a bacteriolytic function; those in tissues and body fluids are associated with the monocyte-macrophage system and enhance the activity of immunoagents. Has bacteriolytic activity against M.luteus. In Gallus gallus (Chicken), this protein is Lysozyme C (LYZ).